The chain runs to 234 residues: HTH-type transcriptional regulator ArcR (234 aa).

40–129 (VRHYTKGQVI…MAFLCKANDD (90 aa)) is an a nucleoside 3',5'-cyclic phosphate binding site. The region spanning 155–228 (KFAKDRIIKL…HKNWLVSKHL (74 aa)) is the HTH crp-type domain. The segment at residues 188–207 (IQLMSDMAGISRETAGHIIH) is a DNA-binding region (H-T-H motif).

It localises to the cytoplasm. Functionally, positively regulates the expression of the arcABDCR operon under anaerobic conditions, thus playing an essential role in arginine catabolism. May also control the expression of genes encoding proteins which are involved in anaerobic metabolism. Can bind cyclic AMP. This chain is HTH-type transcriptional regulator ArcR (arcR), found in Staphylococcus aureus (strain MSSA476).